The chain runs to 519 residues: Cell division cycle protein 20 homolog B (519 aa).

Residues 77-106 (WQLSPARDPESSSSVEEGPPSHTPESLASG) are disordered. A compositionally biased stretch (low complexity) spans 87–96 (SSSSVEEGPP). WD repeat units follow at residues 229-266 (RNDYYLNTLDWSSQNLVAVALGTSVYIWNGQNHSWIEN), 271-310 (VCCHYVSSVTWMREGSCLAVGTSEGEVQLWDAITKKQLRN), 353-392 (YHKEAVCSLKWSPDGRLLSSGCNDGLLTIWPHDPGAGVQG), 399-441 (PQST…NIQT), 443-484 (STQS…RSGG), and 487-519 (GHRDRVLHLSLSPDQTRLFSAAADGTACVWKCC).

This sequence belongs to the WD repeat CDC20/Fizzy family. Expressed in multiciliated cells (MCCs).

It is found in the cytoplasm. Its function is as follows. Protein regulator of centriole-deuterosome disengagement and subsequently participates in the ciliogenesis in multiciliated cells (MCCs). This is Cell division cycle protein 20 homolog B from Mus musculus (Mouse).